The primary structure comprises 553 residues: MDEKKLFLKALKKKFEGEDPDEKYTNFYCFGGWEQSARKKEFTEYAKKAAEKRGGIPFYNPDIGVPLGQRKLMAYRVSGTDAYVEGDDLHFVNNAAIQQMVDDIKRTVIVGMDTAHAVLEKRLGVEVTPETINEYMEAINHALPGGAVVQEHMVEVHPGLVEDCYAKIFTGDDNLADELDKRILIDINKEFPEEQAEQLKSYIGNRTYQVNRVPTIVVRTCDGGTVSRWSAMQIGMSFISAYKLCAGEAAIADFSYAAKHADVIEMGTIMPARRARGPNEPGGVAFGTFADIVQTSRVSDDPANVSLEVIAGAAALYDQVWLGSYMSGGVGFTQYATAAYTDDILDDFVYYGMEYVDDKYGICGTKPTMDVVRDISTEVTLYSLEQYEEYPTLLEDHFGGSQRAAVAAAAAGCSTAFATGNSNAGINGWYLSQILHKEAHSRLGFYGYDLQDQCGASNSLSIRSDEGLIHELRGPNYPNYAMNVGHQPEYAGIAQAPHAARGDAFCTNPLIKVAFADKDLAFDFTSPRKSIAAGALREFMPEGERDLIIPAGK.

A coenzyme F430-binding site is contributed by Gln-150. Coenzyme B is bound by residues Arg-228, 259-260, and Arg-273; that span reads KH. His-260 carries the pros-methylhistidine modification. Arg-274 is subject to 5-methylarginine. Tyr-335 provides a ligand contact to coenzyme M. Gln-402 bears the 2-methylglutamine mark. Tyr-446 serves as a coordination point for coenzyme M. A 1-thioglycine modification is found at Gly-447. Position 452 is a (Z)-2,3-didehydroaspartate (Asp-452). Position 454 is an S-methylcysteine (Cys-454).

This sequence belongs to the methyl-coenzyme M reductase alpha subunit family. In terms of assembly, MCR is a hexamer of two alpha, two beta, and two gamma chains, forming a dimer of heterotrimers. Coenzyme F430 serves as cofactor. The alpha subunit contains six modified amino acids near the active site region. Is methylated on His-260, Arg-274, Gln-402 and Cys-454, probably by the action of specific S-adenosylmethionine-dependent methyltransferases. Also contains a thioglycine at position 447, forming a thiopeptide bond. Contains a didehydroaspartate residue at position 452. The methylation on C5 of Arg-274 is a post-translational methylation not essential in vivo, but which plays a role for the stability and structural integrity of MCR.

It carries out the reaction coenzyme B + methyl-coenzyme M = methane + coenzyme M-coenzyme B heterodisulfide. It functions in the pathway one-carbon metabolism; methyl-coenzyme M reduction; methane from methyl-coenzyme M: step 1/1. Its function is as follows. Component of the methyl-coenzyme M reductase (MCR) I that catalyzes the reductive cleavage of methyl-coenzyme M (CoM-S-CH3 or 2-(methylthio)ethanesulfonate) using coenzyme B (CoB or 7-mercaptoheptanoylthreonine phosphate) as reductant which results in the production of methane and the mixed heterodisulfide of CoB and CoM (CoM-S-S-CoB). This is the final step in methanogenesis. This Methanothermobacter marburgensis (strain ATCC BAA-927 / DSM 2133 / JCM 14651 / NBRC 100331 / OCM 82 / Marburg) (Methanobacterium thermoautotrophicum) protein is Methyl-coenzyme M reductase II subunit alpha (mrtA).